A 347-amino-acid chain; its full sequence is S-adenosylmethionine:tRNA ribosyltransferase-isomerase (347 aa).

The protein belongs to the QueA family. Monomer.

The protein resides in the cytoplasm. The enzyme catalyses 7-aminomethyl-7-carbaguanosine(34) in tRNA + S-adenosyl-L-methionine = epoxyqueuosine(34) in tRNA + adenine + L-methionine + 2 H(+). Its pathway is tRNA modification; tRNA-queuosine biosynthesis. In terms of biological role, transfers and isomerizes the ribose moiety from AdoMet to the 7-aminomethyl group of 7-deazaguanine (preQ1-tRNA) to give epoxyqueuosine (oQ-tRNA). In Exiguobacterium sibiricum (strain DSM 17290 / CCUG 55495 / CIP 109462 / JCM 13490 / 255-15), this protein is S-adenosylmethionine:tRNA ribosyltransferase-isomerase.